We begin with the raw amino-acid sequence, 278 residues long: 4-deoxy-L-threo-5-hexosulose-uronate ketol-isomerase (278 aa).

Positions 196, 198, 203, and 245 each coordinate Zn(2+).

It belongs to the KduI family. Zn(2+) serves as cofactor.

It catalyses the reaction 5-dehydro-4-deoxy-D-glucuronate = 3-deoxy-D-glycero-2,5-hexodiulosonate. The protein operates within glycan metabolism; pectin degradation; 2-dehydro-3-deoxy-D-gluconate from pectin: step 4/5. Functionally, catalyzes the isomerization of 5-dehydro-4-deoxy-D-glucuronate to 3-deoxy-D-glycero-2,5-hexodiulosonate. The chain is 4-deoxy-L-threo-5-hexosulose-uronate ketol-isomerase from Shigella boydii serotype 4 (strain Sb227).